A 381-amino-acid chain; its full sequence is Arginine biosynthesis bifunctional protein ArgJ (381 aa).

Residues Thr-143, Lys-165, Thr-176, Glu-255, Asn-376, and Thr-381 each coordinate substrate. The active-site Nucleophile is Thr-176.

Belongs to the ArgJ family. As to quaternary structure, heterotetramer of two alpha and two beta chains.

The protein localises to the cytoplasm. It catalyses the reaction N(2)-acetyl-L-ornithine + L-glutamate = N-acetyl-L-glutamate + L-ornithine. The enzyme catalyses L-glutamate + acetyl-CoA = N-acetyl-L-glutamate + CoA + H(+). It functions in the pathway amino-acid biosynthesis; L-arginine biosynthesis; L-ornithine and N-acetyl-L-glutamate from L-glutamate and N(2)-acetyl-L-ornithine (cyclic): step 1/1. The protein operates within amino-acid biosynthesis; L-arginine biosynthesis; N(2)-acetyl-L-ornithine from L-glutamate: step 1/4. Its function is as follows. Catalyzes two activities which are involved in the cyclic version of arginine biosynthesis: the synthesis of N-acetylglutamate from glutamate and acetyl-CoA as the acetyl donor, and of ornithine by transacetylation between N(2)-acetylornithine and glutamate. The polypeptide is Arginine biosynthesis bifunctional protein ArgJ (Thermus thermophilus (strain ATCC BAA-163 / DSM 7039 / HB27)).